A 537-amino-acid polypeptide reads, in one-letter code: uncharacterized protein (537 aa).

The signal sequence occupies residues 1 to 15 (MALFQLFSFLNVTLG). A run of 2 helical transmembrane segments spans residues 459-479 (VLFS…GCCF) and 490-510 (VILL…LGFT).

The protein localises to the host membrane. This is an uncharacterized protein from Citrus sinensis (Sweet orange).